The following is a 344-amino-acid chain: L-rhamnose-proton symporter (344 aa).

10 consecutive transmembrane segments (helical) span residues Ala4–Ala24, Trp38–Leu58, Phe68–Ile88, Met101–Ile121, Thr131–Val151, Leu175–Ala195, Leu214–Ile234, Ile259–Gly279, Met290–Leu310, and Val321–Gly341.

The protein belongs to the L-rhamnose transporter (TC 2.A.7.6) family.

It localises to the cell inner membrane. It catalyses the reaction L-rhamnopyranose(in) + H(+)(in) = L-rhamnopyranose(out) + H(+)(out). Functionally, uptake of L-rhamnose across the cytoplasmic membrane with the concomitant transport of protons into the cell (symport system). This is L-rhamnose-proton symporter from Salmonella typhi.